We begin with the raw amino-acid sequence, 275 residues long: Glycerol-3-phosphate dehydrogenase [NAD(P)+] (275 aa).

3 residues coordinate NADPH: W12, R32, and K105. Residues K105, G133, and T135 each contribute to the sn-glycerol 3-phosphate site. A137 provides a ligand contact to NADPH. Sn-glycerol 3-phosphate-binding residues include K188, D241, S251, R252, and N253. The Proton acceptor role is filled by K188. R252 contributes to the NADPH binding site.

This sequence belongs to the NAD-dependent glycerol-3-phosphate dehydrogenase family.

Its subcellular location is the cytoplasm. It carries out the reaction sn-glycerol 3-phosphate + NAD(+) = dihydroxyacetone phosphate + NADH + H(+). The catalysed reaction is sn-glycerol 3-phosphate + NADP(+) = dihydroxyacetone phosphate + NADPH + H(+). It functions in the pathway membrane lipid metabolism; glycerophospholipid metabolism. In terms of biological role, catalyzes the reduction of the glycolytic intermediate dihydroxyacetone phosphate (DHAP) to sn-glycerol 3-phosphate (G3P), the key precursor for phospholipid synthesis. This Paramagnetospirillum magneticum (strain ATCC 700264 / AMB-1) (Magnetospirillum magneticum) protein is Glycerol-3-phosphate dehydrogenase [NAD(P)+].